The following is a 431-amino-acid chain: Foot protein 1 variant 2 (431 aa).

The signal sequence occupies residues 1-20; that stretch reads MARNMNILTLFAVLLGSASA. Tyrosine 22 carries the 3',4'-dihydroxyphenylalanine modification. 4-hydroxyproline is present on proline 33. Residues 41 to 50 form an A-1; approximate repeat; that stretch reads VPPPAWTAWK. Residues 41 to 270 are 13 X 10 AA A-P-P-P-A-W-T-A-W-K; sequence VPPPAWTAWK…APPPAWTAWK (230 aa). 4 positions are modified to 7'-hydroxytryptophan: tryptophan 46, tryptophan 49, tryptophan 56, and tryptophan 59. C-linked (Man) hydroxytryptophan glycosylation is found at tryptophan 46, tryptophan 49, tryptophan 56, and tryptophan 59. The A-2; approximate repeat unit spans residues 51-60; the sequence is AHPPAWTAWK. The B-1 repeat unit spans residues 61–70; it reads ATPKPWTAWK. The interval 61–310 is 27 X 10 AA A-T-P-K-P-W-T-A-W-K; it reads ATPKPWTAWK…ATPKPWTAWR (250 aa). Residue proline 65 is modified to 4-hydroxyproline. Tryptophan 66 is a glycosylation site (C-linked (Man) tryptophan). Residue tryptophan 69 is modified to 7'-hydroxytryptophan. The C-linked (Man) hydroxytryptophan glycan is linked to tryptophan 69. Residues 71–80 form an A-3 repeat; that stretch reads APPPAWTAWK. 4-hydroxyproline is present on residues proline 72, proline 73, and proline 74. Residues tryptophan 76 and tryptophan 79 each carry the 7'-hydroxytryptophan modification. 2 C-linked (Man) hydroxytryptophan glycosylation sites follow: tryptophan 76 and tryptophan 79. Residues 81 to 90 form a B-2 repeat; sequence ATPKPWTAWK. Position 85 is a 4-hydroxyproline (proline 85). Tryptophan 86 is a glycosylation site (C-linked (Man) tryptophan). 7'-hydroxytryptophan is present on tryptophan 89. Tryptophan 89 carries a C-linked (Man) hydroxytryptophan glycan. Residues 91–100 form an A-4; approximate repeat; it reads APPPTWTAWK. Proline 92, proline 93, and proline 94 each carry 4-hydroxyproline. 7'-hydroxytryptophan occurs at positions 96 and 99. C-linked (Man) hydroxytryptophan glycosylation is found at tryptophan 96 and tryptophan 99. One copy of the B-3 repeat lies at 101–110; sequence ATPKPWTAWK. At proline 105 the chain carries 4-hydroxyproline. Tryptophan 106 carries a C-linked (Man) tryptophan glycan. Tryptophan 109 bears the 7'-hydroxytryptophan mark. Tryptophan 109 is a glycosylation site (C-linked (Man) hydroxytryptophan). An A-5; approximate repeat occupies 111-120; the sequence is APPPVWTAWK. 4-hydroxyproline is present on residues proline 112, proline 113, and proline 114. A 7'-hydroxytryptophan mark is found at tryptophan 116 and tryptophan 119. C-linked (Man) hydroxytryptophan glycosylation is found at tryptophan 116 and tryptophan 119. The B-4; approximate repeat unit spans residues 121–130; that stretch reads ATPKPRTAWK. Proline 125 carries the 4-hydroxyproline modification. At tryptophan 129 the chain carries 7'-hydroxytryptophan. Tryptophan 129 is a glycosylation site (C-linked (Man) hydroxytryptophan). An A-6; approximate repeat occupies 131-140; it reads APPPTWTAWK. Proline 132, proline 133, and proline 134 each carry 4-hydroxyproline. A 7'-hydroxytryptophan mark is found at tryptophan 136 and tryptophan 139. 2 C-linked (Man) hydroxytryptophan glycosylation sites follow: tryptophan 136 and tryptophan 139. The B-5; approximate repeat unit spans residues 141-150; the sequence is AAPKPWTAWK. 4-hydroxyproline is present on proline 145. Tryptophan 146 carries C-linked (Man) tryptophan glycosylation. 7'-hydroxytryptophan is present on tryptophan 149. Tryptophan 149 carries a C-linked (Man) hydroxytryptophan glycan. A B-6 repeat occupies 151–160; the sequence is ATPKPWTAWK. A 4-hydroxyproline modification is found at proline 155. A glycan (C-linked (Man) tryptophan) is linked at tryptophan 156. Tryptophan 159 is subject to 7'-hydroxytryptophan. Residue tryptophan 159 is glycosylated (C-linked (Man) hydroxytryptophan). The A-7 repeat unit spans residues 161–170; that stretch reads APPPAWTAWK. Proline 162, proline 163, and proline 164 each carry 4-hydroxyproline. Tryptophan 166 and tryptophan 169 each carry 7'-hydroxytryptophan. Tryptophan 166 and tryptophan 169 each carry a C-linked (Man) hydroxytryptophan glycan. Residues 171–180 form a B-7 repeat; it reads ATPKPWTAWK. Proline 175 is subject to 4-hydroxyproline. Residue tryptophan 176 is glycosylated (C-linked (Man) tryptophan). Tryptophan 179 carries the post-translational modification 7'-hydroxytryptophan. The C-linked (Man) hydroxytryptophan glycan is linked to tryptophan 179. The stretch at 181–190 is one B-8 repeat; it reads ATPKPWTAWK. Position 185 is a 4-hydroxyproline (proline 185). The C-linked (Man) tryptophan glycan is linked to tryptophan 186. The residue at position 189 (tryptophan 189) is a 7'-hydroxytryptophan. Tryptophan 189 is a glycosylation site (C-linked (Man) hydroxytryptophan). The stretch at 191–200 is one B-9 repeat; sequence ATPKPWTAWK. Residue proline 195 is modified to 4-hydroxyproline. C-linked (Man) tryptophan glycosylation is present at tryptophan 196. Tryptophan 199 is subject to 7'-hydroxytryptophan. A glycan (C-linked (Man) hydroxytryptophan) is linked at tryptophan 199. A B-10; approximate repeat occupies 201–210; it reads ATPKPWTVWK. Proline 205 is subject to 4-hydroxyproline. C-linked (Man) tryptophan glycosylation is present at tryptophan 206. Tryptophan 209 bears the 7'-hydroxytryptophan mark. Tryptophan 209 is a glycosylation site (C-linked (Man) hydroxytryptophan). The B-11 repeat unit spans residues 211-220; that stretch reads ATPKPWTAWK. At proline 215 the chain carries 4-hydroxyproline. Residue tryptophan 216 is glycosylated (C-linked (Man) tryptophan). The residue at position 219 (tryptophan 219) is a 7'-hydroxytryptophan. The C-linked (Man) hydroxytryptophan glycan is linked to tryptophan 219. An A-8 repeat occupies 221–230; sequence APPPAWTAWK. A 4-hydroxyproline mark is found at proline 222, proline 223, and proline 224. 7'-hydroxytryptophan occurs at positions 226 and 229. Tryptophan 226 and tryptophan 229 each carry a C-linked (Man) hydroxytryptophan glycan. The B-12 repeat unit spans residues 231–240; it reads ATPKPWTAWK. Proline 235 is modified (4-hydroxyproline). A C-linked (Man) tryptophan glycan is attached at tryptophan 236. At tryptophan 239 the chain carries 7'-hydroxytryptophan. Tryptophan 239 carries a C-linked (Man) hydroxytryptophan glycan. An A-9 repeat occupies 241–250; the sequence is APPPAWTAWK. Proline 242, proline 243, and proline 244 each carry 4-hydroxyproline. Tryptophan 246 and tryptophan 249 each carry 7'-hydroxytryptophan. Tryptophan 246 and tryptophan 249 each carry a C-linked (Man) hydroxytryptophan glycan. One copy of the B-13 repeat lies at 251–260; sequence ATPKPWTAWK. The residue at position 255 (proline 255) is a 4-hydroxyproline. C-linked (Man) tryptophan glycosylation occurs at tryptophan 256. Position 259 is a 7'-hydroxytryptophan (tryptophan 259). Tryptophan 259 carries C-linked (Man) hydroxytryptophan glycosylation. The stretch at 261–270 is one A-10 repeat; the sequence is APPPAWTAWK. 4-hydroxyproline is present on residues proline 262, proline 263, and proline 264. Residues tryptophan 266 and tryptophan 269 each carry the 7'-hydroxytryptophan modification. C-linked (Man) hydroxytryptophan glycans are attached at residues tryptophan 266 and tryptophan 269. The stretch at 271 to 280 is one B-14 repeat; that stretch reads ATPKPWTAWK. A 4-hydroxyproline modification is found at proline 275. The C-linked (Man) tryptophan glycan is linked to tryptophan 276. A 7'-hydroxytryptophan modification is found at tryptophan 279. Residue tryptophan 279 is glycosylated (C-linked (Man) hydroxytryptophan). A B-15 repeat occupies 281–290; the sequence is ATPKPWTAWK. Position 285 is a 4-hydroxyproline (proline 285). A C-linked (Man) tryptophan glycan is attached at tryptophan 286. Tryptophan 289 bears the 7'-hydroxytryptophan mark. Residue tryptophan 289 is glycosylated (C-linked (Man) hydroxytryptophan). The stretch at 291 to 300 is one B-16 repeat; that stretch reads ATPKPWTAWK. Position 295 is a 4-hydroxyproline (proline 295). Tryptophan 296 carries C-linked (Man) tryptophan glycosylation. Tryptophan 299 is subject to 7'-hydroxytryptophan. C-linked (Man) hydroxytryptophan glycosylation occurs at tryptophan 299. The B-17; approximate repeat unit spans residues 301 to 310; sequence ATPKPWTAWR. Proline 305 is modified (4-hydroxyproline). Residue tryptophan 306 is glycosylated (C-linked (Man) tryptophan). Position 309 is a 7'-hydroxytryptophan (tryptophan 309). The C-linked (Man) hydroxytryptophan glycan is linked to tryptophan 309. The segment at 322–377 is disordered; it reads GHGYGGYGKPGKPGKPGSKGPRGPAGPPGATGKTGRTGATGKRGPPGYPGKPGVPG. The span at 323-332 shows a compositional bias: gly residues; the sequence is HGYGGYGKPG. In terms of domain architecture, Collagen-like spans 329 to 380; sequence GKPGKPGKPGSKGPRGPAGPPGATGKTGRTGATGKRGPPGYPGKPGVPGRNG. Positions 336–366 are enriched in low complexity; it reads KPGSKGPRGPAGPPGATGKTGRTGATGKRGP. Residues proline 367, proline 370, and proline 376 each carry the 4-hydroxyproline modification.

As to expression, produced by the byssal gland.

Its subcellular location is the secreted. Provides adhesiveness to the mussel's foot. Mussels produce one of the strongest water insoluble glues. The mussel's adhesive is a bundle of threads, called a byssus, formed by a fibrous collagenous core coated with adhesive proteins. The polypeptide is Foot protein 1 variant 2 (Perna viridis (Asian green mussel)).